Reading from the N-terminus, the 493-residue chain is Probable cytochrome P450 313a2 (493 aa).

Position 438 (cysteine 438) interacts with heme.

Belongs to the cytochrome P450 family. Heme is required as a cofactor.

It is found in the endoplasmic reticulum membrane. The protein localises to the microsome membrane. Its function is as follows. May be involved in the metabolism of insect hormones and in the breakdown of synthetic insecticides. This is Probable cytochrome P450 313a2 (Cyp313a2) from Drosophila melanogaster (Fruit fly).